The chain runs to 602 residues: mRNA-decapping enzyme 1A (602 aa).

Position 82 is a phosphoserine (Ser-82). The span at 152–161 (RSQQAARDKQ) shows a compositional bias: basic and acidic residues. Disordered stretches follow at residues 152–174 (RSQQ…DQRP), 191–234 (NQMG…PSGH), and 267–291 (GDAS…APQS). Residues Ser-162, Ser-199, and Ser-200 each carry the phosphoserine modification. Polar residues predominate over residues 193–229 (MGGSNISSPGLQPSTQLSNLGSTETLEETPSGSQDKS). Ser-335 and Ser-339 each carry phosphoserine. Thr-367 carries the post-translational modification Phosphothreonine. A Phosphoserine modification is found at Ser-372. Arg-395 is subject to Asymmetric dimethylarginine. A Phosphothreonine modification is found at Thr-420. Ser-441, Ser-542, Ser-543, and Ser-545 each carry phosphoserine. Phosphothreonine occurs at positions 548 and 551.

Belongs to the DCP1 family. Forms a complex with EDC3, DCP2, DDX6 and EDC4/HEDLS, within this complex directly interacts with EDC3. Part of a cytoplasmic complex containing proteins involved in mRNA decay, including XRN1 and LSM1. Interacts with DCP1B. Interacts with DCP2. Interacts with DDX17 in an RNA-independent manner. Interacts with PNRC2. Interacts with SMAD4. Interacts with UPF1. Interacts with ZC3HAV1. Interacts with ZFP36L1. Interacts with NBDY. Interacts with DHX34; the interaction is RNA-independent. In terms of tissue distribution, ubiquitous, with highest expression in the spleen and testis (at protein level).

The protein resides in the cytoplasm. The protein localises to the P-body. It is found in the nucleus. It catalyses the reaction a 5'-end (N(7)-methyl 5'-triphosphoguanosine)-ribonucleoside in mRNA + H2O = N(7)-methyl-GDP + a 5'-end phospho-ribonucleoside in mRNA + 2 H(+). Functionally, necessary for the degradation of mRNAs, both in normal mRNA turnover and in nonsense-mediated mRNA decay. Removes the 7-methyl guanine cap structure from mRNA molecules, yielding a 5'-phosphorylated mRNA fragment and 7m-GDP. Contributes to the transactivation of target genes after stimulation by TGFB1. Essential for embryonic development. The chain is mRNA-decapping enzyme 1A (Dcp1a) from Mus musculus (Mouse).